The following is a 467-amino-acid chain: UTP--glucose-1-phosphate uridylyltransferase (467 aa).

Residues 83-86 (LNGG), Lys-97, Gln-160, and Gly-189 contribute to the UTP site. 85-86 (GG) provides a ligand contact to substrate. Substrate is bound by residues His-190 and 218 to 220 (NSD). Residues Asp-220 and Lys-358 each coordinate UTP.

It belongs to the UDPGP type 1 family.

It localises to the cytoplasm. It catalyses the reaction alpha-D-glucose 1-phosphate + UTP + H(+) = UDP-alpha-D-glucose + diphosphate. Its function is as follows. Plays a central role as a glucosyl donor in cellular metabolic pathways. This Musa acuminata (Banana) protein is UTP--glucose-1-phosphate uridylyltransferase (UGPA).